The sequence spans 405 residues: Putative polysaccharide ligase RT0347 (405 aa).

The next 10 membrane-spanning stretches (helical) occupy residues 23–43, 77–97, 120–140, 156–178, 201–221, 227–247, 270–290, 322–342, 353–375, and 377–397; these read IAAT…ISFI, LFIA…NSLV, ILYL…LFFI, FGLY…VIII, ISDS…FILA, IFFK…PIIA, LFIW…GYGF, ILQI…CLVY, ISNF…MISY, and IWQT…KLLV.

Belongs to the O-antigen ligase family.

The protein resides in the membrane. This Rickettsia typhi (strain ATCC VR-144 / Wilmington) protein is Putative polysaccharide ligase RT0347.